A 180-amino-acid polypeptide reads, in one-letter code: NAD(P)H-quinone oxidoreductase subunit I, chloroplastic (180 aa).

4Fe-4S ferredoxin-type domains follow at residues 55-84 (GRIH…VDWR) and 95-124 (LNYS…MTEE). 8 residues coordinate [4Fe-4S] cluster: Cys-64, Cys-67, Cys-70, Cys-74, Cys-104, Cys-107, Cys-110, and Cys-114.

It belongs to the complex I 23 kDa subunit family. In terms of assembly, NDH is composed of at least 16 different subunits, 5 of which are encoded in the nucleus. It depends on [4Fe-4S] cluster as a cofactor.

Its subcellular location is the plastid. It localises to the chloroplast thylakoid membrane. It carries out the reaction a plastoquinone + NADH + (n+1) H(+)(in) = a plastoquinol + NAD(+) + n H(+)(out). The enzyme catalyses a plastoquinone + NADPH + (n+1) H(+)(in) = a plastoquinol + NADP(+) + n H(+)(out). Its function is as follows. NDH shuttles electrons from NAD(P)H:plastoquinone, via FMN and iron-sulfur (Fe-S) centers, to quinones in the photosynthetic chain and possibly in a chloroplast respiratory chain. The immediate electron acceptor for the enzyme in this species is believed to be plastoquinone. Couples the redox reaction to proton translocation, and thus conserves the redox energy in a proton gradient. The sequence is that of NAD(P)H-quinone oxidoreductase subunit I, chloroplastic from Amborella trichopoda.